A 447-amino-acid chain; its full sequence is Phosphoglucosamine mutase (447 aa).

The Phosphoserine intermediate role is filled by Ser-108. Mg(2+) is bound by residues Ser-108, Asp-247, Asp-249, and Asp-251. Ser-108 carries the phosphoserine modification.

This sequence belongs to the phosphohexose mutase family. Mg(2+) serves as cofactor. Post-translationally, activated by phosphorylation.

The catalysed reaction is alpha-D-glucosamine 1-phosphate = D-glucosamine 6-phosphate. In terms of biological role, catalyzes the conversion of glucosamine-6-phosphate to glucosamine-1-phosphate. The chain is Phosphoglucosamine mutase from Bordetella petrii (strain ATCC BAA-461 / DSM 12804 / CCUG 43448).